The primary structure comprises 440 residues: Peroxisome proliferator-activated receptor delta (440 aa).

Residues 1-53 form a disordered region; it reads MEQPQEETPEAREEEKEEVAMGDGAPELNGGPEHTLPSSSCADLSQNSSPSSL. Over residues 36-53 the composition is skewed to polar residues; sequence LPSSSCADLSQNSSPSSL. Residues 70–144 constitute a DNA-binding region (nuclear receptor); the sequence is NMECRVCGDK…LGMSHNAIRF (75 aa). 2 consecutive NR C4-type zinc fingers follow at residues 73 to 93 and 110 to 132; these read CRVC…CEGC and CDRI…FQKC. The NR LBD domain occupies 210 to 438; that stretch reads FVIHDIETLW…HPLLQEIYKD (229 aa).

Belongs to the nuclear hormone receptor family. NR1 subfamily. In terms of assembly, heterodimer with the retinoid X receptor. Interacts (via domain NR LBD) with CRY1 and CRY2 in a ligand-dependent manner. In terms of processing, 'Lys-48'-linked polyubiquitinated; leading to proteasomal degradation. Deubiquitinated and stabilized by OTUD3. In terms of tissue distribution, heart, adrenal and intestine.

The protein resides in the nucleus. In terms of biological role, ligand-activated transcription factor key mediator of energy metabolism in adipose tissues. Receptor that binds peroxisome proliferators such as hypolipidemic drugs and fatty acids. Has a preference for poly-unsaturated fatty acids, such as gamma-linoleic acid and eicosapentanoic acid. Once activated by a ligand, the receptor binds to promoter elements of target genes. Regulates the peroxisomal beta-oxidation pathway of fatty acids. Functions as transcription activator for the acyl-CoA oxidase gene. Decreases expression of NPC1L1 once activated by a ligand. The chain is Peroxisome proliferator-activated receptor delta (Ppard) from Mus musculus (Mouse).